A 70-amino-acid chain; its full sequence is Turripeptide Lol9.1 (70 aa).

The first 20 residues, 1-20, serve as a signal peptide directing secretion; that stretch reads MKVYCLLLVLLVGLVSQAHG. A Kazal-like domain is found at 21–70; the sequence is KPTKRCLSVCSAEYEPVCGSDGKTYANKCHLMTEACWSPTSITLVHEGKC. 3 cysteine pairs are disulfide-bonded: cysteine 26/cysteine 56, cysteine 30/cysteine 49, and cysteine 38/cysteine 70.

This sequence belongs to the conopeptide P-like superfamily. In terms of tissue distribution, expressed by the venom duct.

It is found in the secreted. Functionally, acts as a neurotoxin by inhibiting an ion channel. May also act as a serine protease inhibitor, since it possess the kazal serine protease inhibitor signature. The chain is Turripeptide Lol9.1 from Iotyrris olangoensis (Sea snail).